We begin with the raw amino-acid sequence, 511 residues long: Spermatogenesis-associated protein 2 (511 aa).

Positions Ala77–Ser149 constitute a PUB domain. The PIM motif motif lies at Thr320 to Arg337.

This sequence belongs to the SPATA2 family. Interacts (via the PIM motif) with RNF31/HOIP (via the PUB domain); the interaction is direct. Interacts (via the PUB domain) with CYLD; the interaction is direct. Expressed in the testis and to a lesser extent in the brain, while skeletal muscle and kidney show weak expression.

It is found in the cytoplasm. The protein resides in the nucleus. Bridging factor that mediates the recruitment of CYLD to the LUBAC complex, thereby regulating TNF-alpha-induced necroptosis. Acts as a direct binding intermediate that bridges RNF31/HOIP, the catalytic subunit of the LUBAC complex, and the deubiquitinase (CYLD), thereby recruiting CYLD to the TNF-R1 signaling complex (TNF-RSC). Required to activate the 'Met-1'- (linear) and 'Lys-63'-linked deubiquitinase activities of CYLD. Controls the kinase activity of RIPK1 and TNF-alpha-induced necroptosis by promoting 'Met-1'-linked deubiquitination of RIPK1 by CYLD. The chain is Spermatogenesis-associated protein 2 from Rattus norvegicus (Rat).